Reading from the N-terminus, the 380-residue chain is 3-dehydroquinate synthase (380 aa).

NAD(+)-binding positions include 118-122 (GVIGD), 142-143 (TS), K155, and K164. E197, H259, and H278 together coordinate Zn(2+).

Belongs to the sugar phosphate cyclases superfamily. Dehydroquinate synthase family. Co(2+) serves as cofactor. It depends on Zn(2+) as a cofactor. The cofactor is NAD(+).

The protein resides in the cytoplasm. It carries out the reaction 7-phospho-2-dehydro-3-deoxy-D-arabino-heptonate = 3-dehydroquinate + phosphate. Its pathway is metabolic intermediate biosynthesis; chorismate biosynthesis; chorismate from D-erythrose 4-phosphate and phosphoenolpyruvate: step 2/7. Functionally, catalyzes the conversion of 3-deoxy-D-arabino-heptulosonate 7-phosphate (DAHP) to dehydroquinate (DHQ). The protein is 3-dehydroquinate synthase of Sinorhizobium medicae (strain WSM419) (Ensifer medicae).